The primary structure comprises 358 residues: Alanine racemase (358 aa).

Residue Lys-35 is the Proton acceptor; specific for D-alanine of the active site. An N6-(pyridoxal phosphate)lysine modification is found at Lys-35. Residue Arg-130 participates in substrate binding. Tyr-255 acts as the Proton acceptor; specific for L-alanine in catalysis. Substrate is bound at residue Met-303.

This sequence belongs to the alanine racemase family. Requires pyridoxal 5'-phosphate as cofactor.

It catalyses the reaction L-alanine = D-alanine. Its pathway is amino-acid biosynthesis; D-alanine biosynthesis; D-alanine from L-alanine: step 1/1. Catalyzes the interconversion of L-alanine and D-alanine. May also act on other amino acids. This Shewanella baltica (strain OS195) protein is Alanine racemase (alr).